Here is a 269-residue protein sequence, read N- to C-terminus: Small ribosomal subunit protein uS3 (269 aa).

A KH type-2 domain is found at 38-106 (IREWLHKNLE…QIQLNILEVK (69 aa)). A disordered region spans residues 215 to 269 (AQKAARQAAQGGRGGRGGNRRGRGDRPDRRGGRRRAEAAKQSAETPAPQTENAGA). Positions 236–252 (GRGDRPDRRGGRRRAEA) are enriched in basic and acidic residues. Positions 256-269 (SAETPAPQTENAGA) are enriched in polar residues.

This sequence belongs to the universal ribosomal protein uS3 family. In terms of assembly, part of the 30S ribosomal subunit. Forms a tight complex with proteins S10 and S14.

Its function is as follows. Binds the lower part of the 30S subunit head. Binds mRNA in the 70S ribosome, positioning it for translation. The polypeptide is Small ribosomal subunit protein uS3 (Cutibacterium acnes (strain DSM 16379 / KPA171202) (Propionibacterium acnes)).